The following is a 667-amino-acid chain: YTH domain-containing protein ECT2 (667 aa).

Disordered regions lie at residues 264-305 (QRPV…PSSV) and 379-398 (NELN…GNLD). The segment covering 267 to 285 (VSGSGVASSYSKSSTVPSS) has biased composition (low complexity). Positions 286–305 (RNQNYRSNSHYTSVHQPSSV) are enriched in polar residues. A YTH domain is found at 442-579 (AMFFIIKSYS…EQGLKIVKIF (138 aa)). RNA contacts are provided by residues 448-450 (KSY), D454, 464-465 (WA), N497, W521, W526, and W534. Positions 606–667 (KAKQTQKQVS…VTGDVVANGC (62 aa)) are disordered. Positions 614-627 (VSEEKVTDEKKESA) are enriched in basic and acidic residues. Residues 628–639 (TAESASKESPAA) are compositionally biased toward low complexity.

In terms of assembly, interacts (via C-terminus) with CIPK1. As to expression, expressed in the shoot apex, at the sites of leaf formation, and in emerging leaves. Highly expressed in rapidly developing tissues.

It is found in the cytoplasm. It localises to the nucleus. Functionally, specifically recognizes and binds N6-methyladenosine (m6A)-containing RNAs, and regulates mRNA stability. M6A is a modification present at internal sites of mRNAs and some non-coding RNAs and plays a role in mRNA stability and processing. Binds preferentially in the 3'UTRs of target genes. May play dual roles in regulating 3'UTR processing in the nucleus and facilitating mRNA stability in the cytoplasm. Required for the correct timing of leaf formation and normal leaf morphology. Functions redundantly with ECT3. Required for proper trichome branching and morphology. Controls trichome morphology by binding transcripts related to trichome morphogenesis and affecting their stability. The protein is YTH domain-containing protein ECT2 of Arabidopsis thaliana (Mouse-ear cress).